A 333-amino-acid polypeptide reads, in one-letter code: NADH dehydrogenase (ubiquinone) complex I, assembly factor 6 (333 aa).

The N-terminal 44 residues, 1 to 44 (MATSMLGSVPGPRPFGLAGLFRRRPPRDPWERVRRLPRLSAVRR), are a transit peptide targeting the mitochondrion.

Belongs to the NDUFAF6 family.

It is found in the mitochondrion inner membrane. Its function is as follows. Involved in the assembly of mitochondrial NADH:ubiquinone oxidoreductase complex (complex I) at early stages. May play a role in the biogenesis of complex I subunit MT-ND1. The chain is NADH dehydrogenase (ubiquinone) complex I, assembly factor 6 (Ndufaf6) from Rattus norvegicus (Rat).